Consider the following 935-residue polypeptide: Transmembrane channel-like protein 1 (935 aa).

Disordered regions lie at residues 1 to 21 (MPRH…DEGK) and 37 to 204 (ERGK…LGSL). Basic and acidic residues-rich tracts occupy residues 37 to 47 (ERGKIKQASRD), 54 to 79 (RNGE…EKKH), 109 to 136 (DKSS…EKDV), 152 to 163 (NHEKTKQHLKEE), and 172 to 184 (PETT…KSES). A run of 10 helical transmembrane segments spans residues 303–340 (SSVA…MGKP), 392–423 (RMPL…ANEE), 480–510 (LTRF…VRRS), 523–550 (WWER…ISTL), 555–589 (PRIA…QLKR), 633–670 (WETM…VRFL), 690–710 (VSGN…GAFY), 714–736 (LPAL…VMCC), 751–774 (NFYM…TIVS), and 818–851 (LVLP…KKKL). Residues 874 to 886 (EQARKAGEQRRNS) show a composition bias toward basic and acidic residues. A disordered region spans residues 874 to 935 (EQARKAGEQR…QQPQKNSKKR (62 aa)). Composition is skewed to polar residues over residues 899 to 919 (SHVS…TSSG) and 926 to 935 (QQPQKNSKKR).

This sequence belongs to the TMC family. Interacts specifically with isoform CD3 of PCDH15A (via cytoplasmic domain). In terms of tissue distribution, in adults, expression is restricted to the hair cells of inner ear and lateral line organ. Expressed at higher levels in the larval lateral-line neuromasts than in the larval inner ear. Expressed in the sensory hair cell patches of the ear at 4 days post fertilization (dpf).

The protein resides in the cell membrane. It carries out the reaction Ca(2+)(in) = Ca(2+)(out). Functionally, pore-forming subunit of the mechanotransducer (MET) non-selective cation channel complex located at the tips of hair-cell stereocilia. Highly permeable to calcium and likely transports monovalent cations. This chain is Transmembrane channel-like protein 1, found in Danio rerio (Zebrafish).